The primary structure comprises 332 residues: Glycerol-3-phosphate dehydrogenase [NAD(P)+] (332 aa).

Residues serine 11, phenylalanine 12, lysine 32, and lysine 106 each coordinate NADPH. Residues lysine 106, glycine 137, and serine 139 each coordinate sn-glycerol 3-phosphate. Position 141 (alanine 141) interacts with NADPH. The sn-glycerol 3-phosphate site is built by lysine 192, aspartate 245, serine 255, arginine 256, and asparagine 257. Lysine 192 serves as the catalytic Proton acceptor. Arginine 256 serves as a coordination point for NADPH. The NADPH site is built by valine 280 and glutamate 282.

It belongs to the NAD-dependent glycerol-3-phosphate dehydrogenase family.

It is found in the cytoplasm. It carries out the reaction sn-glycerol 3-phosphate + NAD(+) = dihydroxyacetone phosphate + NADH + H(+). The catalysed reaction is sn-glycerol 3-phosphate + NADP(+) = dihydroxyacetone phosphate + NADPH + H(+). Its pathway is membrane lipid metabolism; glycerophospholipid metabolism. Catalyzes the reduction of the glycolytic intermediate dihydroxyacetone phosphate (DHAP) to sn-glycerol 3-phosphate (G3P), the key precursor for phospholipid synthesis. The protein is Glycerol-3-phosphate dehydrogenase [NAD(P)+] of Staphylococcus carnosus (strain TM300).